We begin with the raw amino-acid sequence, 393 residues long: Acetate kinase (393 aa).

Asparagine 7 lines the Mg(2+) pocket. Lysine 14 is a binding site for ATP. Arginine 89 is a binding site for substrate. Aspartate 146 serves as the catalytic Proton donor/acceptor. ATP is bound by residues histidine 204–glycine 208, aspartate 279–arginine 281, and glycine 327–asparagine 331. A Mg(2+)-binding site is contributed by glutamate 379.

This sequence belongs to the acetokinase family. As to quaternary structure, homodimer. Mg(2+) serves as cofactor. Mn(2+) is required as a cofactor.

It is found in the cytoplasm. It carries out the reaction acetate + ATP = acetyl phosphate + ADP. Its pathway is metabolic intermediate biosynthesis; acetyl-CoA biosynthesis; acetyl-CoA from acetate: step 1/2. Functionally, catalyzes the formation of acetyl phosphate from acetate and ATP. Can also catalyze the reverse reaction. The sequence is that of Acetate kinase from Acholeplasma laidlawii (strain PG-8A).